A 274-amino-acid chain; its full sequence is Protein RecA (274 aa).

43-50 provides a ligand contact to ATP; the sequence is GPESSGKT.

It belongs to the RecA family.

The protein localises to the cytoplasm. Its function is as follows. Can catalyze the hydrolysis of ATP in the presence of single-stranded DNA, the ATP-dependent uptake of single-stranded DNA by duplex DNA, and the ATP-dependent hybridization of homologous single-stranded DNAs. It interacts with LexA causing its activation and leading to its autocatalytic cleavage. In Neisseria polysaccharea, this protein is Protein RecA.